The sequence spans 209 residues: Uracil phosphoribosyltransferase (209 aa).

5-phospho-alpha-D-ribose 1-diphosphate is bound by residues R79, R104, and 131–139; that span reads DPMLATGGS. Uracil-binding positions include I194 and 199–201; that span reads GDA. D200 contributes to the 5-phospho-alpha-D-ribose 1-diphosphate binding site.

The protein belongs to the UPRTase family. Mg(2+) is required as a cofactor.

The catalysed reaction is UMP + diphosphate = 5-phospho-alpha-D-ribose 1-diphosphate + uracil. The protein operates within pyrimidine metabolism; UMP biosynthesis via salvage pathway; UMP from uracil: step 1/1. Allosterically activated by GTP. Catalyzes the conversion of uracil and 5-phospho-alpha-D-ribose 1-diphosphate (PRPP) to UMP and diphosphate. This Clostridium kluyveri (strain NBRC 12016) protein is Uracil phosphoribosyltransferase.